We begin with the raw amino-acid sequence, 62 residues long: Translational regulator CsrA (62 aa).

Belongs to the CsrA/RsmA family. Homodimer; the beta-strands of each monomer intercalate to form a hydrophobic core, while the alpha-helices form wings that extend away from the core.

It is found in the cytoplasm. Its function is as follows. A key translational regulator that binds mRNA to regulate translation initiation and/or mRNA stability. Mediates global changes in gene expression, shifting from rapid growth to stress survival by linking envelope stress, the stringent response and the catabolite repression systems. Usually binds in the 5'-UTR; binding at or near the Shine-Dalgarno sequence prevents ribosome-binding, repressing translation, binding elsewhere in the 5'-UTR can activate translation and/or stabilize the mRNA. Its function is antagonized by small RNA(s). The polypeptide is Translational regulator CsrA (Idiomarina loihiensis (strain ATCC BAA-735 / DSM 15497 / L2-TR)).